The following is a 1012-amino-acid chain: Structural polyprotein (1012 aa).

D30 is an a divalent metal cation binding site. Positions 513–755 (ADKGYEVVAN…AGRQYHLAMA (243 aa)) constitute a Peptidase S50 domain. S652 (nucleophile) is an active-site residue. Residue K692 is part of the active site. The segment at 970–1012 (MEMKHRNPRRAPPKPKPKPNAPSQRPPGRLGRWIRTVSDEDLE) is disordered. The segment covering 975 to 986 (RNPRRAPPKPKP) has biased composition (basic residues). The interaction with VP1 protein stretch occupies residues 1003 to 1012 (IRTVSDEDLE).

Homotrimer. A central divalent metal stabilizes the VP2 trimer. Interacts with host ITGA4/ITGB1. As to quaternary structure, homodimer. Interacts (via C-terminus) with VP1 in the cytoplasm. Interacts with VP2. Specific enzymatic cleavages yield mature proteins. The capsid assembly seems to be regulated by polyprotein processing. The protease VP4 cleaves itself off the polyprotein, thus releasing pre-VP2 and VP3 within the infected cell. During capsid assembly, the C-terminus of pre-VP2 is further processed by VP4, giving rise to VP2, the external capsid protein and three small peptides that all stay closely associated with the capsid.

It is found in the virion. It localises to the host cytoplasm. Its function is as follows. Capsid protein VP2 self assembles to form an icosahedral capsid with a T=13 symmetry, about 70 nm in diameter, and consisting of 260 VP2 trimers. The capsid encapsulates the genomic dsRNA. VP2 is also involved in attachment and entry into the host cell by interacting with host ITGA4/ITGB1. In terms of biological role, the precursor of VP2 plays an important role in capsid assembly. First, pre-VP2 and VP2 oligomers assemble to form a procapsid. Then, the pre-VP2 intermediates may be processed into VP2 proteins by proteolytic cleavage mediated by VP4 to obtain the mature virion. The final capsid is composed of pentamers and hexamers but VP2 has a natural tendency to assemble into all-pentameric structures. Therefore pre-VP2 may be required to allow formation of the hexameric structures. Functionally, protease VP4 is a serine protease that cleaves the polyprotein into its final products. Pre-VP2 is first partially cleaved, and may be completely processed by VP4 upon capsid maturation. Capsid protein VP3 plays a key role in virion assembly by providing a scaffold for the capsid made of VP2. May self-assemble to form a T=4-like icosahedral inner-capsid composed of at least 180 trimers. Plays a role in genomic RNA packaging by recruiting VP1 into the capsid and interacting with the dsRNA genome segments to form a ribonucleoprotein complex. Additionally, the interaction of the VP3 C-terminal tail with VP1 removes the inherent structural blockade of the polymerase active site. Thus, VP3 can also function as a transcriptional activator. Its function is as follows. Structural peptide 1 is a small peptide derived from pre-VP2 C-terminus. It destabilizes and perforates cell membranes, suggesting a role during entry. In terms of biological role, structural peptide 2 is a small peptide derived from pVP2 C-terminus. It is not essential for the virus viability, but viral growth is affected when missing. Functionally, structural peptide 3 is a small peptide derived from pVP2 C-terminus. It is not essential for the virus viability, but viral growth is affected when missing. Structural peptide 4 is a small peptide derived from pVP2 C-terminus. It is essential for the virus viability. In Avian infectious bursal disease virus (strain Australian 002-73) (IBDV), this protein is Structural polyprotein.